The chain runs to 380 residues: Cytochrome b (380 aa).

The next 4 membrane-spanning stretches (helical) occupy residues 33-53, 77-98, 113-133, and 178-198; these read FGSL…FLAM, WLIR…YMHI, WNIG…GYVL, and FFAF…LHLL. The heme b site is built by histidine 83 and histidine 97. Histidine 182 and histidine 196 together coordinate heme b. Histidine 201 serves as a coordination point for a ubiquinone. A run of 4 helical transmembrane segments spans residues 226-246, 288-308, 320-340, and 347-367; these read YKDL…ALFA, LGGV…PFLH, LTQM…WIGG, and FIII…VLFP.

The protein belongs to the cytochrome b family. The cytochrome bc1 complex contains 3 respiratory subunits (MT-CYB, CYC1 and UQCRFS1), 2 core proteins (UQCRC1 and UQCRC2) and probably 6 low-molecular weight proteins. The cofactor is heme b.

Its subcellular location is the mitochondrion inner membrane. In terms of biological role, component of the ubiquinol-cytochrome c reductase complex (complex III or cytochrome b-c1 complex) that is part of the mitochondrial respiratory chain. The b-c1 complex mediates electron transfer from ubiquinol to cytochrome c. Contributes to the generation of a proton gradient across the mitochondrial membrane that is then used for ATP synthesis. This chain is Cytochrome b (mt-cyb), found in Gadus morhua (Atlantic cod).